The chain runs to 264 residues: 5'-nucleotidase SurE (264 aa).

A divalent metal cation contacts are provided by aspartate 8, aspartate 9, serine 41, and asparagine 98.

It belongs to the SurE nucleotidase family. The cofactor is a divalent metal cation.

The protein resides in the cytoplasm. It catalyses the reaction a ribonucleoside 5'-phosphate + H2O = a ribonucleoside + phosphate. Its function is as follows. Nucleotidase that shows phosphatase activity on nucleoside 5'-monophosphates. The sequence is that of 5'-nucleotidase SurE from Carboxydothermus hydrogenoformans (strain ATCC BAA-161 / DSM 6008 / Z-2901).